The primary structure comprises 298 residues: HTH-type transcriptional regulator ArgP (298 aa).

Residues 4–60 (VDYRWVAALDAVIAQRGFERAAEKLCITQSAVSQRIKQLEKLMAQPLLVREQPPRPT) form the HTH lysR-type domain. Positions 21–40 (FERAAEKLCITQSAVSQRIK) form a DNA-binding region, H-T-H motif.

The protein belongs to the LysR transcriptional regulatory family. In terms of assembly, homodimer.

Controls the transcription of genes involved in arginine and lysine metabolism. This Photobacterium profundum (strain SS9) protein is HTH-type transcriptional regulator ArgP.